A 203-amino-acid chain; its full sequence is Auxin-induced protein 22E (203 aa).

Positions Leu-15–Leu-19 match the EAR-like (transcriptional repression) motif. The tract at residues Leu-15–Ala-77 is disordered. Basic and acidic residues predominate over residues Ser-43–Cys-52. Residues Ser-58–Ser-67 show a composition bias toward low complexity. The PB1 domain occupies Gly-107–Gly-199.

This sequence belongs to the Aux/IAA family. Homodimers and heterodimers.

The protein localises to the nucleus. Its function is as follows. Aux/IAA proteins are short-lived transcriptional factors that function as repressors of early auxin response genes at low auxin concentrations. Repression is thought to result from the interaction with auxin response factors (ARFs), proteins that bind to the auxin-responsive promoter element (AuxRE). Formation of heterodimers with ARF proteins may alter their ability to modulate early auxin response genes expression. The polypeptide is Auxin-induced protein 22E (AUX22E) (Vigna radiata var. radiata (Mung bean)).